We begin with the raw amino-acid sequence, 293 residues long: Ribosomal RNA small subunit methyltransferase A (293 aa).

The S-adenosyl-L-methionine site is built by Asn38, Val40, Gly65, Glu86, Asp116, and Asn135.

Belongs to the class I-like SAM-binding methyltransferase superfamily. rRNA adenine N(6)-methyltransferase family. RsmA subfamily.

The protein resides in the cytoplasm. The enzyme catalyses adenosine(1518)/adenosine(1519) in 16S rRNA + 4 S-adenosyl-L-methionine = N(6)-dimethyladenosine(1518)/N(6)-dimethyladenosine(1519) in 16S rRNA + 4 S-adenosyl-L-homocysteine + 4 H(+). Specifically dimethylates two adjacent adenosines (A1518 and A1519) in the loop of a conserved hairpin near the 3'-end of 16S rRNA in the 30S particle. May play a critical role in biogenesis of 30S subunits. This Nocardia farcinica (strain IFM 10152) protein is Ribosomal RNA small subunit methyltransferase A.